The chain runs to 442 residues: MSDTIAAIATAHGVGSISIVRLSGERALEFALKLSHKTKLTPRHATFTKLFNQNNEIIDEAIMIYFKAPYSFTGEDIVEFQTHGGFSVSEVLLEELVSLGARLALAGEFSKRACLNGKMTPLKALNIQDLILSKSALAAKIIARNMQGNLGELLEKIRTDLVKTLAFVETSIDYADDDLPSDLLEQISTMCEENSKILKEIYTLSQSKKGLIEGFKIAIVGKPNVGKSSLLNALLSYERAIVSDIAGTTRDTIEENFKLGTHLLRIIDTAGIRESKDVIEQIGVALSKKSLEDADIILAVFDASRVQDKEDEKIFDLLANTDKKIFWILNKSDLENVFKNTQNKNFIKLSAQKDITLLKEELQNYLNSFDSEGIMVSSLDLINACKISSEAIFRAKGLLEESSLEFFAFELNLAINELARFTKDFQRDEILDEMFGNFCLGK.

(6S)-5-formyl-5,6,7,8-tetrahydrofolate-binding residues include Arg21, Glu79, and Lys118. The TrmE-type G domain maps to 214-367 (GFKIAIVGKP…LKEELQNYLN (154 aa)). Asn224 contacts K(+). GTP contacts are provided by residues 224–229 (NVGKSS), 243–249 (SDIAGTT), and 268–271 (DTAG). Ser228 is a binding site for Mg(2+). Ser243, Ile245, and Thr248 together coordinate K(+). Thr249 contacts Mg(2+). Lys442 contacts (6S)-5-formyl-5,6,7,8-tetrahydrofolate.

The protein belongs to the TRAFAC class TrmE-Era-EngA-EngB-Septin-like GTPase superfamily. TrmE GTPase family. Homodimer. Heterotetramer of two MnmE and two MnmG subunits. The cofactor is K(+).

Its subcellular location is the cytoplasm. In terms of biological role, exhibits a very high intrinsic GTPase hydrolysis rate. Involved in the addition of a carboxymethylaminomethyl (cmnm) group at the wobble position (U34) of certain tRNAs, forming tRNA-cmnm(5)s(2)U34. In Campylobacter jejuni subsp. jejuni serotype O:2 (strain ATCC 700819 / NCTC 11168), this protein is tRNA modification GTPase MnmE.